Reading from the N-terminus, the 529-residue chain is L-ornithine N(5)-monooxygenase (529 aa).

FAD is bound by residues 100 to 108 (EKQPQFAWH) and Gln119. Lys124 serves as a coordination point for substrate. Val185 contacts FAD. 270–273 (NGQS) contacts NADP(+). Substrate is bound by residues 309–312 (NEIF) and Asn339. 339-341 (NYG) is a binding site for NADP(+). 493-495 (TLL) contributes to the FAD binding site. Substrate is bound at residue Ser496.

This sequence belongs to the lysine N(6)-hydroxylase/L-ornithine N(5)-oxygenase family. Homotetramer. FAD is required as a cofactor.

The enzyme catalyses L-ornithine + NADPH + O2 = N(5)-hydroxy-L-ornithine + NADP(+) + H2O. It carries out the reaction L-ornithine + NADH + O2 = N(5)-hydroxy-L-ornithine + NAD(+) + H2O. The protein operates within siderophore biosynthesis. Its function is as follows. L-ornithine N(5)-monooxygenase; part of the gene cluster that mediates the biosynthesis of hydroxamate-containing siderophores that play a critical role in virulence. Cochliobolus heterostrophus produces extracellular coprogen-type siderophores including coprogen, neocoprogen I and neocoprogen II, as well as the intracellular siderophore ferricrocin. The role of extracellular siderophores is to supply iron to their producers in planta and the intracellular ferricrocin is required for intracellular iron distribution and storage with a crucial role in ascus and ascospore development. SIDA2 catalyzes the conversion of L-ornithine to N(5)-hydroxyornithine, the first step in the biosynthesis of all hydroxamate-containing siderophores. The assembly of extracellular coprogen-type siderophores is then performed by the nonribosomal peptide synthetase (NRPS) NPS6 whereas the intracellular siderophore ferricrocin is assembled by NPS2. This is L-ornithine N(5)-monooxygenase from Cochliobolus heterostrophus (strain C4 / ATCC 48331 / race T) (Southern corn leaf blight fungus).